The following is a 167-amino-acid chain: Large ribosomal subunit protein uL10 (167 aa).

It belongs to the universal ribosomal protein uL10 family. In terms of assembly, part of the ribosomal stalk of the 50S ribosomal subunit. The N-terminus interacts with L11 and the large rRNA to form the base of the stalk. The C-terminus forms an elongated spine to which L12 dimers bind in a sequential fashion forming a multimeric L10(L12)X complex.

Its function is as follows. Forms part of the ribosomal stalk, playing a central role in the interaction of the ribosome with GTP-bound translation factors. In Paraburkholderia phytofirmans (strain DSM 17436 / LMG 22146 / PsJN) (Burkholderia phytofirmans), this protein is Large ribosomal subunit protein uL10.